The following is a 67-amino-acid chain: ATP synthase F(0) complex subunit 8 (67 aa).

The chain crosses the membrane as a helical span at residues 8–24; it reads TWLIMISSMILTLFITF. At Lys-54 the chain carries N6-acetyllysine; alternate. At Lys-54 the chain carries N6-succinyllysine; alternate. Lys-57 is subject to N6-acetyllysine.

The protein belongs to the ATPase protein 8 family. Component of the ATP synthase complex composed at least of ATP5F1A/subunit alpha, ATP5F1B/subunit beta, ATP5MC1/subunit c (homooctomer), MT-ATP6/subunit a, MT-ATP8/subunit 8, ATP5ME/subunit e, ATP5MF/subunit f, ATP5MG/subunit g, ATP5MK/subunit k, ATP5MJ/subunit j, ATP5F1C/subunit gamma, ATP5F1D/subunit delta, ATP5F1E/subunit epsilon, ATP5PF/subunit F6, ATP5PB/subunit b, ATP5PD/subunit d, ATP5PO/subunit OSCP. ATP synthase complex consists of a soluble F(1) head domain (subunits alpha(3) and beta(3)) - the catalytic core - and a membrane F(0) domain - the membrane proton channel (subunits c, a, 8, e, f, g, k and j). These two domains are linked by a central stalk (subunits gamma, delta, and epsilon) rotating inside the F1 region and a stationary peripheral stalk (subunits F6, b, d, and OSCP). Interacts with PRICKLE3.

The protein localises to the mitochondrion membrane. Functionally, subunit 8, of the mitochondrial membrane ATP synthase complex (F(1)F(0) ATP synthase or Complex V) that produces ATP from ADP in the presence of a proton gradient across the membrane which is generated by electron transport complexes of the respiratory chain. ATP synthase complex consist of a soluble F(1) head domain - the catalytic core - and a membrane F(1) domain - the membrane proton channel. These two domains are linked by a central stalk rotating inside the F(1) region and a stationary peripheral stalk. During catalysis, ATP synthesis in the catalytic domain of F(1) is coupled via a rotary mechanism of the central stalk subunits to proton translocation. In vivo, can only synthesize ATP although its ATP hydrolase activity can be activated artificially in vitro. Part of the complex F(0) domain. The chain is ATP synthase F(0) complex subunit 8 from Halichoerus grypus (Gray seal).